The chain runs to 415 residues: Histidine--tRNA ligase (415 aa).

The protein belongs to the class-II aminoacyl-tRNA synthetase family. In terms of assembly, homodimer.

The protein localises to the cytoplasm. The enzyme catalyses tRNA(His) + L-histidine + ATP = L-histidyl-tRNA(His) + AMP + diphosphate + H(+). This is Histidine--tRNA ligase from Gluconobacter oxydans (strain 621H) (Gluconobacter suboxydans).